The chain runs to 86 residues: Exodeoxyribonuclease 7 small subunit (86 aa).

Belongs to the XseB family. In terms of assembly, heterooligomer composed of large and small subunits.

It is found in the cytoplasm. It carries out the reaction Exonucleolytic cleavage in either 5'- to 3'- or 3'- to 5'-direction to yield nucleoside 5'-phosphates.. In terms of biological role, bidirectionally degrades single-stranded DNA into large acid-insoluble oligonucleotides, which are then degraded further into small acid-soluble oligonucleotides. This chain is Exodeoxyribonuclease 7 small subunit, found in Xanthomonas oryzae pv. oryzae (strain MAFF 311018).